The following is a 1412-amino-acid chain: Sister chromatid cohesion protein PDS5 homolog B (1412 aa).

The stretch at 383–419 is one HEAT repeat; sequence LLVNDHLLNFVRERTLDKRWRVRKEAMMGLAQIYKKY. The segment at 1137 to 1412 is disordered; that stretch reads PLSSAGKQSQ…RRRTSKRERR (276 aa). Low complexity-rich tracts occupy residues 1139–1149 and 1156–1167; these read SSAGKQSQSKS and SNASSSSNPSSP. 4 stretches are compositionally biased toward basic and acidic residues: residues 1172 to 1184, 1196 to 1212, 1223 to 1241, and 1263 to 1272; these read GRLD…HSEN, KKTD…LEKP, SEEK…DQKL, and QEEKRLKEDV. The span at 1322–1331 shows a compositional bias: acidic residues; the sequence is VEEEEEEEER. Over residues 1350–1362 the composition is skewed to polar residues; it reads RTQQSRAGRSKQA. Residues 1386-1397 are compositionally biased toward acidic residues; it reads VPQEEVMEEEEV. A compositionally biased stretch (basic residues) spans 1402–1412; that stretch reads VRRRTSKRERR.

In terms of assembly, interacts with the cohesin complex.

It is found in the nucleus. Plays a role in androgen-induced proliferative arrest. Required for maintenance of sister chromatid cohesion during mitosis. The sequence is that of Sister chromatid cohesion protein PDS5 homolog B (PDS5B) from Gallus gallus (Chicken).